A 252-amino-acid polypeptide reads, in one-letter code: Thiamine thiazole synthase (252 aa).

NAD(+) is bound by residues serine 35, 54–55 (EK), glycine 62, valine 126, and 152–154 (HVD). Positions 154 and 169 each coordinate Fe cation. Residue methionine 217 participates in NAD(+) binding. Arginine 227 is a binding site for glycine.

Belongs to the THI4 family. In terms of assembly, homooctamer; tetramer of dimers. Fe(2+) is required as a cofactor.

The catalysed reaction is hydrogen sulfide + glycine + NAD(+) = ADP-5-ethyl-4-methylthiazole-2-carboxylate + nicotinamide + 3 H2O + H(+). It functions in the pathway cofactor biosynthesis; thiamine diphosphate biosynthesis. Its function is as follows. Involved in the biosynthesis of the thiazole moiety of thiamine. Catalyzes the conversion of NAD and glycine to adenosine diphosphate 5-(2-hydroxyethyl)-4-methylthiazole-2-carboxylate (ADT), an adenylated thiazole intermediate, using free sulfide as a source of sulfur. This chain is Thiamine thiazole synthase, found in Pyrococcus furiosus (strain ATCC 43587 / DSM 3638 / JCM 8422 / Vc1).